The following is a 515-amino-acid chain: 2-isopropylmalate synthase (515 aa).

The Pyruvate carboxyltransferase domain maps to 5 to 267; that stretch reads VIIFDTTLRD…HTGLDHKEIH (263 aa). The Mn(2+) site is built by aspartate 14, histidine 202, histidine 204, and asparagine 238. The tract at residues 392–515 is regulatory domain; the sequence is KLNYLSVQSG…EMKQQKFATV (124 aa).

The protein belongs to the alpha-IPM synthase/homocitrate synthase family. LeuA type 1 subfamily. As to quaternary structure, homodimer. Mn(2+) serves as cofactor.

It localises to the cytoplasm. The enzyme catalyses 3-methyl-2-oxobutanoate + acetyl-CoA + H2O = (2S)-2-isopropylmalate + CoA + H(+). Its pathway is amino-acid biosynthesis; L-leucine biosynthesis; L-leucine from 3-methyl-2-oxobutanoate: step 1/4. Catalyzes the condensation of the acetyl group of acetyl-CoA with 3-methyl-2-oxobutanoate (2-ketoisovalerate) to form 3-carboxy-3-hydroxy-4-methylpentanoate (2-isopropylmalate). The sequence is that of 2-isopropylmalate synthase from Vibrio atlanticus (strain LGP32) (Vibrio splendidus (strain Mel32)).